A 120-amino-acid chain; its full sequence is Small ribosomal subunit protein bS6 (120 aa).

Residues 97 to 112 (SNEPSPILKNQSTENT) show a composition bias toward polar residues. Positions 97–120 (SNEPSPILKNQSTENTPVIDVTAN) are disordered.

This sequence belongs to the bacterial ribosomal protein bS6 family.

Binds together with bS18 to 16S ribosomal RNA. This chain is Small ribosomal subunit protein bS6, found in Rickettsia bellii (strain RML369-C).